Here is an 89-residue protein sequence, read N- to C-terminus: Small ribosomal subunit protein uS15 (89 aa).

The protein belongs to the universal ribosomal protein uS15 family. Part of the 30S ribosomal subunit. Forms a bridge to the 50S subunit in the 70S ribosome, contacting the 23S rRNA.

Functionally, one of the primary rRNA binding proteins, it binds directly to 16S rRNA where it helps nucleate assembly of the platform of the 30S subunit by binding and bridging several RNA helices of the 16S rRNA. Its function is as follows. Forms an intersubunit bridge (bridge B4) with the 23S rRNA of the 50S subunit in the ribosome. The polypeptide is Small ribosomal subunit protein uS15 (Rhizobium johnstonii (strain DSM 114642 / LMG 32736 / 3841) (Rhizobium leguminosarum bv. viciae)).